Here is a 522-residue protein sequence, read N- to C-terminus: DNA primase DnaG (522 aa).

The region spanning 171–257 (DAIIILEGRA…CVEDLVQKEI (87 aa)) is the Toprim domain. Mg(2+) is bound by residues Glu-177, Asp-219, and Asp-221.

This sequence belongs to the archaeal DnaG primase family. Forms a ternary complex with MCM helicase and DNA. Component of the archaeal exosome complex. The cofactor is Mg(2+).

It carries out the reaction ssDNA + n NTP = ssDNA/pppN(pN)n-1 hybrid + (n-1) diphosphate.. Functionally, RNA polymerase that catalyzes the synthesis of short RNA molecules used as primers for DNA polymerase during DNA replication. Also part of the exosome, which is a complex involved in RNA degradation. Acts as a poly(A)-binding protein that enhances the interaction between heteromeric, adenine-rich transcripts and the exosome. This chain is DNA primase DnaG, found in Methanosarcina mazei (strain ATCC BAA-159 / DSM 3647 / Goe1 / Go1 / JCM 11833 / OCM 88) (Methanosarcina frisia).